The primary structure comprises 502 residues: Ribose import ATP-binding protein RbsA (502 aa).

ABC transporter domains follow at residues 6-242 (IDMT…IARD) and 253-496 (ALGA…SGAR). 38–45 (GQNGAGKS) contributes to the ATP binding site.

Belongs to the ABC transporter superfamily. Ribose importer (TC 3.A.1.2.1) family. As to quaternary structure, the complex is composed of an ATP-binding protein (RbsA), two transmembrane proteins (RbsC) and a solute-binding protein (RbsB).

Its subcellular location is the cell inner membrane. It carries out the reaction D-ribose(out) + ATP + H2O = D-ribose(in) + ADP + phosphate + H(+). In terms of biological role, part of the ABC transporter complex RbsABC involved in ribose import. Responsible for energy coupling to the transport system. This chain is Ribose import ATP-binding protein RbsA, found in Cereibacter sphaeroides (strain ATCC 17023 / DSM 158 / JCM 6121 / CCUG 31486 / LMG 2827 / NBRC 12203 / NCIMB 8253 / ATH 2.4.1.) (Rhodobacter sphaeroides).